Here is a 79-residue protein sequence, read N- to C-terminus: Putative membrane protein insertion efficiency factor (79 aa).

Belongs to the UPF0161 family.

Its subcellular location is the cell inner membrane. Could be involved in insertion of integral membrane proteins into the membrane. This is Putative membrane protein insertion efficiency factor from Synechocystis sp. (strain ATCC 27184 / PCC 6803 / Kazusa).